We begin with the raw amino-acid sequence, 255 residues long: Hydroxyacylglutathione hydrolase (255 aa).

7 residues coordinate Zn(2+): His56, His58, Asp60, His61, His114, Asp133, and His171.

It belongs to the metallo-beta-lactamase superfamily. Glyoxalase II family. Monomer. The cofactor is Zn(2+).

It carries out the reaction an S-(2-hydroxyacyl)glutathione + H2O = a 2-hydroxy carboxylate + glutathione + H(+). The protein operates within secondary metabolite metabolism; methylglyoxal degradation; (R)-lactate from methylglyoxal: step 2/2. Its function is as follows. Thiolesterase that catalyzes the hydrolysis of S-D-lactoyl-glutathione to form glutathione and D-lactic acid. This chain is Hydroxyacylglutathione hydrolase, found in Fuscovulum blasticum (Rhodobacter blasticus).